Consider the following 842-residue polypeptide: Outer membrane usher protein AggC (842 aa).

An N-terminal signal peptide occupies residues 1-21; sequence MKTSSFIIVILLCFRIENVIA. Cys-819 and Cys-841 are disulfide-bonded.

The protein belongs to the fimbrial export usher family.

Its subcellular location is the cell outer membrane. Involved in the export and assembly of the AAF/I fimbriae subunits across the outer membrane. The chain is Outer membrane usher protein AggC (aggC) from Escherichia coli.